Reading from the N-terminus, the 972-residue chain is Peptidyl-glycine alpha-amidating monooxygenase (972 aa).

An N-terminal signal peptide occupies residues 1-20 (MAGFRSLLVLLLVFPSGCVG). Positions 1-494 (MAGFRSLLVL…EGTWEPEHTG (494 aa)) are peptidylglycine alpha-hydroxylating monooxygenase. Residues 21–30 (FRSPLSVFKR) constitute a propeptide that is removed on maturation. The Intragranular portion of the chain corresponds to 31 to 873 (FKETTRSFSN…VPAVLITTLL (843 aa)). 5 disulfides stabilise this stretch: Cys-42-Cys-181, Cys-76-Cys-121, Cys-109-Cys-126, Cys-222-Cys-329, and Cys-288-Cys-310. The Cu(2+) site is built by His-102 and His-103. His-167, His-237, His-239, and Met-309 together coordinate Cu(2+). Residues 495-817 (DFHVEEALDW…STEKMEHRSV (323 aa)) form a peptidyl-alpha-hydroxyglycine alpha-amidating lyase region. NHL repeat units lie at residues 498 to 541 (VEEA…NSFD), 567 to 608 (AAVL…LDPK), 617 to 662 (LGRS…FSPS), and 670 to 714 (GEAS…FKTD). Val-517 is a binding site for Ca(2+). Residue Arg-530 participates in a protein binding. Position 582 (His-582) interacts with Zn(2+). Residue Leu-584 coordinates Ca(2+). The cysteines at positions 631 and 652 are disulfide-linked. An a protein-binding site is contributed by Tyr-651. Residue His-687 coordinates Zn(2+). A disulfide bridge links Cys-699 with Cys-710. Residue Arg-703 participates in a protein binding. Asn-762 carries N-linked (GlcNAc...) asparagine glycosylation. Residues 766–809 (GEIIDVFKPVRKHFDMPHDIAASEDGTVYVGDAHTNTVWKFTST) form an NHL 5 repeat. Residue His-783 coordinates Zn(2+). Asp-784 is a Ca(2+) binding site. The helical transmembrane segment at 874 to 897 (VIPVVVLLAIALFIRWKKSRAFGD) threads the bilayer. The Cytoplasmic segment spans residues 898–972 (SERKLEASSG…APPPAPAPSS (75 aa)). Residues 925-942 (NFFASRKGYSRKGFDRLS) are interaction with RASSF9. Residues Ser-929 and Ser-942 each carry the phosphoserine modification. The interval 937–972 (GFDRLSTEGSDQEKDEDASESEEEYSAPPPAPAPSS) is disordered. At Thr-943 the chain carries Phosphothreonine. A Phosphoserine; by UHMK1 modification is found at Ser-946. A compositionally biased stretch (acidic residues) spans 949–961 (EKDEDASESEEEY). Residue Ser-957 is modified to Phosphoserine. Positions 963–972 (APPPAPAPSS) are enriched in pro residues.

This sequence in the C-terminal section; belongs to the peptidyl-alpha-hydroxyglycine alpha-amidating lyase family. It in the N-terminal section; belongs to the copper type II ascorbate-dependent monooxygenase family. Monomer. Interacts with RASSF9. Zn(2+) serves as cofactor. Requires Cu(2+) as cofactor.

It localises to the cytoplasmic vesicle. It is found in the secretory vesicle membrane. The catalysed reaction is a [peptide]-C-terminal glycine + 2 L-ascorbate + O2 = a [peptide]-C-terminal (2S)-2-hydroxyglycine + 2 monodehydro-L-ascorbate radical + H2O. It catalyses the reaction a [peptide]-C-terminal (2S)-2-hydroxyglycine = a [peptide]-C-terminal amide + glyoxylate. It carries out the reaction N-dodecanoylglycine + 2 L-ascorbate + O2 = N-dodecanoyl-(2S)-hydroxyglycine + 2 monodehydro-L-ascorbate radical + H2O. The enzyme catalyses N-dodecanoyl-(2S)-hydroxyglycine = dodecanamide + glyoxylate. The catalysed reaction is N-(9Z,12Z,15Z)-octadecatrienoylglycine + 2 L-ascorbate + O2 = N-(9Z,12Z,15Z)-octadecatrienoyl-(2S)-hydroxyglycine + 2 monodehydro-L-ascorbate radical + H2O. It catalyses the reaction N-(9Z,12Z,15Z)-octadecatrienoyl-(2S)-hydroxyglycine = (9Z,12Z,15Z)-octadecatrienamide + glyoxylate. It carries out the reaction N-(9Z-octadecenoyl)glycine + 2 L-ascorbate + O2 = N-(9Z-octadecenoyl)-(2S)-hydroxyglycine + 2 monodehydro-L-ascorbate radical + H2O. The enzyme catalyses N-(9Z-octadecenoyl)-(2S)-hydroxyglycine = (9Z)-octadecenamide + glyoxylate. The catalysed reaction is N-tetradecanoylglycine + 2 L-ascorbate + O2 = N-tetradecanoyl-(2S)-hydroxyglycine + 2 monodehydro-L-ascorbate radical + H2O. It catalyses the reaction N-tetradecanoyl-(2S)-hydroxyglycine = tetradecamide + glyoxylate. It carries out the reaction N-decanoylglycine + 2 L-ascorbate + O2 = N-decanoyl-(2S)-hydroxyglycine + 2 monodehydro-L-ascorbate radical + H2O. The enzyme catalyses N-decanoyl-(2S)-hydroxyglycine = decanamide + glyoxylate. The catalysed reaction is N-octanoylglycine + 2 L-ascorbate + O2 = N-octanoyl-(2S)-hydroxyglycine + 2 monodehydro-L-ascorbate radical + H2O. It catalyses the reaction N-octanoyl-(2S)-hydroxyglycine = octanamide + glyoxylate. With respect to regulation, PAM activity is inhibited by EDTA, phenylglyoxal and diethyl pyrocarbonate. PAL activity is stimulated by cadmium and inhibited by mercury. Bifunctional enzyme that catalyzes amidation of the C-terminus of proteins. Alpha-amidation is present at the C-terminus of many endocrine hormones and neuropeptides and is required for their activity. C-terminal amidation also takes place in response to protein fragmentation triggered by oxidative stress, promoting degradation of amidated protein fragments by the proteasome. Alpha-amidation involves two sequential reactions, both of which are catalyzed by separate catalytic domains of the enzyme. The first step, catalyzed by peptidyl alpha-hydroxylating monooxygenase (PHM) domain, is the copper-, ascorbate-, and O2- dependent stereospecific hydroxylation (with S stereochemistry) at the alpha-carbon (C-alpha) of the C-terminal glycine of the peptidylglycine substrate. The second step, catalyzed by the peptidylglycine amidoglycolate lyase (PAL) domain, is the zinc-dependent cleavage of the N-C-alpha bond, producing the alpha-amidated peptide and glyoxylate. Similarly, catalyzes the two-step conversion of an N-fatty acylglycine to a primary fatty acid amide and glyoxylate. This Bos taurus (Bovine) protein is Peptidyl-glycine alpha-amidating monooxygenase (PAM).